The primary structure comprises 557 residues: Cytochrome P450 734A2 (557 aa).

Residues 13 to 35 (WATWRVAAVAAAAAVWVTMHVAA) form a helical membrane-spanning segment. Residue Cys495 coordinates heme.

This sequence belongs to the cytochrome P450 family. Heme serves as cofactor. In terms of tissue distribution, expressed in roots, shoot apex, leaf sheaths and leaf blades.

It localises to the membrane. Its function is as follows. Cytochrome P450 involved in brassinosteroids (BRs) inactivation and regulation of BRs homeostasis. Is a multifunctional and multisubstrate enzyme that controls the endogenous bioactive BR content both by direct inactivation of castasterone (CS) and by decreasing the levels of BR precursors. Catalyzes the oxidation of carbon 22 hydroxylated BR intermediates to produce C26 oxidized metabolites. This Oryza sativa subsp. japonica (Rice) protein is Cytochrome P450 734A2 (CYP734A2).